Consider the following 829-residue polypeptide: Translation initiation factor IF-2 (829 aa).

The span at 128 to 137 shows a compositional bias: basic and acidic residues; it reads QNAEEEKVEA. The segment at 128–157 is disordered; sequence QNAEEEKVEASAKTVQNNEDIQPQTSKKKE. Residues 140–152 are compositionally biased toward polar residues; the sequence is KTVQNNEDIQPQT. Residues 327 to 497 form the tr-type G domain; the sequence is TRAPVVTVMG…LLIAEMQDLK (171 aa). The interval 336–343 is G1; it reads GHVDHGKT. 336–343 contributes to the GTP binding site; sequence GHVDHGKT. The segment at 361–365 is G2; that stretch reads GITQH. The segment at 383–386 is G3; the sequence is DTPG. GTP contacts are provided by residues 383 to 387 and 437 to 440; these read DTPGH and NKID. The G4 stretch occupies residues 437–440; the sequence is NKID. The G5 stretch occupies residues 473–475; it reads SAL.

It belongs to the TRAFAC class translation factor GTPase superfamily. Classic translation factor GTPase family. IF-2 subfamily.

The protein localises to the cytoplasm. Functionally, one of the essential components for the initiation of protein synthesis. Protects formylmethionyl-tRNA from spontaneous hydrolysis and promotes its binding to the 30S ribosomal subunits. Also involved in the hydrolysis of GTP during the formation of the 70S ribosomal complex. In Rickettsia felis (strain ATCC VR-1525 / URRWXCal2) (Rickettsia azadi), this protein is Translation initiation factor IF-2.